Here is a 119-residue protein sequence, read N- to C-terminus: UPF0344 protein lp_1373 (119 aa).

4 helical membrane passes run 1–21 (MYLLGHIIGWLWLMLTVAIGL), 32–52 (FLILSRIGYLLIIITGVALAI), 60–80 (WLTLLKVILGLGTIGLIEVAF), and 92–112 (LVTLLVCGTLLTIICGIGLHW).

Belongs to the UPF0344 family.

It is found in the cell membrane. The polypeptide is UPF0344 protein lp_1373 (Lactiplantibacillus plantarum (strain ATCC BAA-793 / NCIMB 8826 / WCFS1) (Lactobacillus plantarum)).